A 156-amino-acid polypeptide reads, in one-letter code: ATP synthase subunit b (156 aa).

The helical transmembrane segment at 5 to 27 (ITLIGQMITFAIFVGFTMKFVWP) threads the bilayer.

It belongs to the ATPase B chain family. As to quaternary structure, F-type ATPases have 2 components, F(1) - the catalytic core - and F(0) - the membrane proton channel. F(1) has five subunits: alpha(3), beta(3), gamma(1), delta(1), epsilon(1). F(0) has three main subunits: a(1), b(2) and c(10-14). The alpha and beta chains form an alternating ring which encloses part of the gamma chain. F(1) is attached to F(0) by a central stalk formed by the gamma and epsilon chains, while a peripheral stalk is formed by the delta and b chains.

It is found in the cell inner membrane. Its function is as follows. F(1)F(0) ATP synthase produces ATP from ADP in the presence of a proton or sodium gradient. F-type ATPases consist of two structural domains, F(1) containing the extramembraneous catalytic core and F(0) containing the membrane proton channel, linked together by a central stalk and a peripheral stalk. During catalysis, ATP synthesis in the catalytic domain of F(1) is coupled via a rotary mechanism of the central stalk subunits to proton translocation. Component of the F(0) channel, it forms part of the peripheral stalk, linking F(1) to F(0). In Francisella tularensis subsp. tularensis (strain SCHU S4 / Schu 4), this protein is ATP synthase subunit b.